A 358-amino-acid chain; its full sequence is MKPSILEKLQQLGDRLEEVTHLLGQPEATADMDNYRKLTREHAELTPVVEVFQNYRLAQSDLADAEEMLSDPEMKDFAAEEIEAAKAKIGALDTELQKLLLPKDADDDKNIFIEVRAGTGGDEAALFAGDLLRMYSRYAERNRWQVEIVSANESELGGYKEVIARIIGLGAYSRLKFESGGHRVQRVPATESQGRIHTSACTVAVMPEADELEDIELNPVDLRIDTFRASGAGGQHINKTDSAVRITHLPTGMVVECQDGRSQHANKAQAMKVLAARLNDAQKREAQAKEAAERKSLIGSGDRSERIRTYNYPQGRVTDHRINLTLHKLDFVMDGDLAEITDALIAEHQAELLAAMGD.

An N5-methylglutamine modification is found at glutamine 235.

The protein belongs to the prokaryotic/mitochondrial release factor family. In terms of processing, methylated by PrmC. Methylation increases the termination efficiency of RF1.

It localises to the cytoplasm. Functionally, peptide chain release factor 1 directs the termination of translation in response to the peptide chain termination codons UAG and UAA. This chain is Peptide chain release factor 1, found in Neisseria meningitidis serogroup C (strain 053442).